The following is a 239-amino-acid chain: Ribosomal RNA small subunit methyltransferase G (239 aa).

S-adenosyl-L-methionine-binding positions include G77, F82, 128 to 129 (AE), and R147.

It belongs to the methyltransferase superfamily. RNA methyltransferase RsmG family.

It is found in the cytoplasm. Functionally, specifically methylates the N7 position of guanine in position 535 of 16S rRNA. The sequence is that of Ribosomal RNA small subunit methyltransferase G from Bacillus cereus (strain AH187).